The following is a 299-amino-acid chain: HTH-type transcriptional regulator CrgA (299 aa).

The HTH lysR-type domain maps to 1-60 (MKTNSEELTVFVQVVESGSFSRAAEQLAMANSAVSRIVKRLEEKLGVNLLNRTTRQLSLT). A DNA-binding region (H-T-H motif) is located at residues 20–39 (FSRAAEQLAMANSAVSRIVK).

This sequence belongs to the LysR transcriptional regulatory family. As to quaternary structure, forms oligomers. Oligomerization is required for DNA binding.

Its function is as follows. Involved in the regulation of bacterial adhesion to host epithelial cells. May play a central regulatory role in meningococcal adhesion, particularly in switching from initial adhesion to intimate adhesion by downregulating the bacterial surface structures that hinder this adhesion. During intimate adhesion, negatively regulates the expression of pilC1, encoding a pilus-associated protein, pilE, encoding the pilin, and sia genes, encoding the capsule. Also negatively regulates its own expression. May also regulate other genes that are involved in intimate adhesion. Binds specifically to the promoter region of pilC1 and crgA (both harboring a CREN element), and pilE and sia (both devoid of a CREN element). Acts through interaction with RNA polymerase (RNAP). Interaction with RNAP leads to the production of short abortive transcripts, suggesting that CrgA may act by preventing RNAP from clearing the promoter. This Neisseria meningitidis serogroup C (strain 8013) protein is HTH-type transcriptional regulator CrgA.